Here is a 485-residue protein sequence, read N- to C-terminus: Glutamyl-tRNA(Gln) amidotransferase subunit A (485 aa).

Catalysis depends on charge relay system residues lysine 79 and serine 154. Serine 178 functions as the Acyl-ester intermediate in the catalytic mechanism.

The protein belongs to the amidase family. GatA subfamily. Heterotrimer of A, B and C subunits.

The enzyme catalyses L-glutamyl-tRNA(Gln) + L-glutamine + ATP + H2O = L-glutaminyl-tRNA(Gln) + L-glutamate + ADP + phosphate + H(+). In terms of biological role, allows the formation of correctly charged Gln-tRNA(Gln) through the transamidation of misacylated Glu-tRNA(Gln) in organisms which lack glutaminyl-tRNA synthetase. The reaction takes place in the presence of glutamine and ATP through an activated gamma-phospho-Glu-tRNA(Gln). The protein is Glutamyl-tRNA(Gln) amidotransferase subunit A of Bacillus licheniformis (strain ATCC 14580 / DSM 13 / JCM 2505 / CCUG 7422 / NBRC 12200 / NCIMB 9375 / NCTC 10341 / NRRL NRS-1264 / Gibson 46).